Consider the following 316-residue polypeptide: MQDWLTALPKAELHIHLEGALEPELLFALAQRNGVTLPWPDIDALRQAYQYQNLQEFLDLYYQGAHVLRTEQDFYDLTWAYLRKCAEQGVTHTEPFFDPQTHTDRGVPFQVVLSGIQAALADGRRDLGIQSGLILSFLRHLPEEAAMRTLDEALPYRDAFIAVGLDSSEAGFPPRLFERVFARARAEGLPAVAHAGEEGPPEYIWEALERLQVKRIDHGVRAWEDPRLIAHLVDTQIPLTVCPLSNVRLQVFEHMGQHNVLEMLERGLNVCINSDDPAYFGGYVLENFMALREHLGMSQEQARRLAANSLASVLTA.

Residues H14, H16, and H194 each contribute to the Zn(2+) site. E197 (proton donor) is an active-site residue. D275 is a Zn(2+) binding site. D276 serves as a coordination point for substrate.

Belongs to the metallo-dependent hydrolases superfamily. Adenosine and AMP deaminases family. Adenine deaminase type 2 subfamily. Zn(2+) is required as a cofactor.

The enzyme catalyses adenine + H2O + H(+) = hypoxanthine + NH4(+). Catalyzes the hydrolytic deamination of adenine to hypoxanthine. Plays an important role in the purine salvage pathway and in nitrogen catabolism. This chain is Adenine deaminase, found in Bordetella avium (strain 197N).